The following is a 162-amino-acid chain: UPF0460 protein y4vQ (162 aa).

This sequence belongs to the UPF0460 family.

The protein is UPF0460 protein y4vQ of Sinorhizobium fredii (strain NBRC 101917 / NGR234).